The primary structure comprises 561 residues: Proline--tRNA ligase (561 aa).

Belongs to the class-II aminoacyl-tRNA synthetase family. ProS type 1 subfamily. Homodimer.

It localises to the cytoplasm. It catalyses the reaction tRNA(Pro) + L-proline + ATP = L-prolyl-tRNA(Pro) + AMP + diphosphate. In terms of biological role, catalyzes the attachment of proline to tRNA(Pro) in a two-step reaction: proline is first activated by ATP to form Pro-AMP and then transferred to the acceptor end of tRNA(Pro). As ProRS can inadvertently accommodate and process non-cognate amino acids such as alanine and cysteine, to avoid such errors it has two additional distinct editing activities against alanine. One activity is designated as 'pretransfer' editing and involves the tRNA(Pro)-independent hydrolysis of activated Ala-AMP. The other activity is designated 'posttransfer' editing and involves deacylation of mischarged Ala-tRNA(Pro). The misacylated Cys-tRNA(Pro) is not edited by ProRS. This is Proline--tRNA ligase from Thermosipho africanus (strain TCF52B).